The primary structure comprises 114 residues: uncharacterized protein (114 aa).

The segment at 90–114 (VESSQKRKPEESTIGMDAPKKMKRG) is disordered.

This is an uncharacterized protein from Caenorhabditis elegans.